Reading from the N-terminus, the 525-residue chain is GMP synthase [glutamine-hydrolyzing] (525 aa).

The region spanning 8-207 (KILILDFGSQ…ALDICGCAAN (200 aa)) is the Glutamine amidotransferase type-1 domain. C85 acts as the Nucleophile in catalysis. Catalysis depends on residues H181 and E183. Positions 208–400 (WKPSSIIEDA…LGLPYNMLYR (193 aa)) constitute a GMPS ATP-PPase domain. 235–241 (SGGVDSS) serves as a coordination point for ATP.

As to quaternary structure, homodimer.

The catalysed reaction is XMP + L-glutamine + ATP + H2O = GMP + L-glutamate + AMP + diphosphate + 2 H(+). It functions in the pathway purine metabolism; GMP biosynthesis; GMP from XMP (L-Gln route): step 1/1. Catalyzes the synthesis of GMP from XMP. The polypeptide is GMP synthase [glutamine-hydrolyzing] (Shewanella sp. (strain MR-7)).